The sequence spans 696 residues: MAKKTPLERYRNIGIMAHIDAGKTTTSERILFYTGVSHKLGEVHDGAATMDWMEQEQERGITITSAATTCFWRGMAGNYPEHRINVIDTPGHVDFTIEVERSLRVLDGACTVFCAVGGVQPQTETVWRQANKYGVPRLAFVNKMDRSGANFMRVREQMISRLKTNPVPIQLPIGAEDGFAGVIDLVKMKAIYWDDASQGTKFEEREIPASMQADAAIWREKMVESAAEASEELMNKYLETGDLSIEDIKQGLRVRTINNEIVPMLCGTAFKNKGVQAMLDAVLDYLPSPLDIPAIKGTNENGVEDEREPSEDKPFSALAFKIATDPYVGQLIFFRVYSGTIKSGDTVFNPVKGKKERIGRLLQMHANQREEIKEVGTGDIAAAVGLKEVTTGDTLCDLDHIITLERMDFPEPVIHVAVEPKTKIDQEKMGIALNRLAQEDPSFRVRTDEESGQTIISGMGELHLEIIVDRMKREFGVEANVGAPQVAYREAIRKQVEIEGKFVKQSGGRGQYGHVWLRMEPNEAGKGFEFLDEIKGGVVPREYIPAVEKGLQDSLANGVLAGYPVVDVKVALFDGSYHDVDSNENAFKMAASIAFKDGMRKANPVLLEPMMAVEVETPSDFMGNVVGDLSSRRGIIQGMDDIPGFKVIRAEVPLAEMFGYSTILRSATQGRATYSMEFKHYSEAPKNVAEAIINKK.

The tr-type G domain occupies 8–290 (ERYRNIGIMA…AVLDYLPSPL (283 aa)). GTP-binding positions include 17-24 (AHIDAGKT), 88-92 (DTPGH), and 142-145 (NKMD).

It belongs to the TRAFAC class translation factor GTPase superfamily. Classic translation factor GTPase family. EF-G/EF-2 subfamily.

It localises to the cytoplasm. Catalyzes the GTP-dependent ribosomal translocation step during translation elongation. During this step, the ribosome changes from the pre-translocational (PRE) to the post-translocational (POST) state as the newly formed A-site-bound peptidyl-tRNA and P-site-bound deacylated tRNA move to the P and E sites, respectively. Catalyzes the coordinated movement of the two tRNA molecules, the mRNA and conformational changes in the ribosome. The polypeptide is Elongation factor G (Nitrosomonas europaea (strain ATCC 19718 / CIP 103999 / KCTC 2705 / NBRC 14298)).